Consider the following 919-residue polypeptide: Transcriptional regulatory protein EDS1 (919 aa).

The tract at residues 1-54 is disordered; the sequence is MSHHVPNLYGTPIRDPHEHKRNSASMGEVNQSVSSRNCERGSEKGTKQRKKASR. A compositionally biased stretch (polar residues) spans 23–36; that stretch reads SASMGEVNQSVSSR. The span at 37-46 shows a compositional bias: basic and acidic residues; that stretch reads NCERGSEKGT. The zn(2)-C6 fungal-type DNA-binding region spans 56–85; that stretch reads CDQCRRKRIKCRFDKHTGVCQGCLEVGEKC. Residues 297-338 are disordered; it reads AGCPNKKLGTDGRSDKWDKNSTWKPVYRSSNPSHPSTEKNVS. Basic and acidic residues predominate over residues 304–317; the sequence is LGTDGRSDKWDKNS. Positions 318-338 are enriched in polar residues; that stretch reads TWKPVYRSSNPSHPSTEKNVS.

Binds DNA in a sequence-specific manner.

It localises to the nucleus. The chain is Transcriptional regulatory protein EDS1 (EDS1) from Saccharomyces cerevisiae (strain Lalvin EC1118 / Prise de mousse) (Baker's yeast).